The following is a 104-amino-acid chain: MLFKPKTRAIPSPTARTLPVSFKLASSDTPLILSSKMEETSVGCALVEANLLVEAKAAAAGLAALVELIRVLDRERIAAVRANIIICACFFYLFCYCSCDSYES.

Residues Ile-77–Ser-98 traverse the membrane as a helical segment.

Its subcellular location is the membrane. This is an uncharacterized protein from Saccharomyces cerevisiae (strain ATCC 204508 / S288c) (Baker's yeast).